The following is a 1197-amino-acid chain: Sensor protein EvgS (1197 aa).

Positions 1 to 21 are cleaved as a signal peptide; sequence MKFLPYIFLLCCGLWSTISFA. The Cytoplasmic segment spans residues 22-325; that stretch reads DEDYIEYRGI…SMTDENGSVR (304 aa). Residues 326–346 form a helical membrane-spanning segment; the sequence is GVMGDILNIITLQTGLNFSPI. At 347-537 the chain is on the periplasmic side; sequence TVSHNIHAGT…TWDLYSEQFY (191 aa). A helical membrane pass occupies residues 538–558; it reads IVTTLSVLLVGSSLLWGFYLL. The Cytoplasmic portion of the chain corresponds to 559–1197; the sequence is RSVRRRKVIQ…EIAVFCQQNN (639 aa). The region spanning 718–938 is the Histidine kinase domain; that stretch reads TMSHEIRTPI…TFTITIPVEI (221 aa). At His721 the chain carries Phosphohistidine; by autocatalysis. The Response regulatory domain occupies 960–1074; it reads SILIADDHPT…VLKTHLSQLH (115 aa). Position 1009 is a 4-aspartylphosphate (Asp1009). The 100-residue stretch at 1098–1197 folds into the HPt domain; that stretch reads DLQLMQEILM…EIAVFCQQNN (100 aa). A Phosphohistidine modification is found at His1137.

Activation requires a sequential transfer of a phosphate group from a His in the primary transmitter domain, to an Asp in the receiver domain and to a His in the secondary transmitter domain.

The protein localises to the cell inner membrane. It carries out the reaction ATP + protein L-histidine = ADP + protein N-phospho-L-histidine.. In terms of biological role, member of the two-component regulatory system EvgS/EvgA. Phosphorylates EvgA via a four-step phosphorelay in response to environmental signals. This is Sensor protein EvgS (evgS) from Escherichia coli O157:H7.